Here is a 476-residue protein sequence, read N- to C-terminus: NADH-quinone oxidoreductase subunit N (476 aa).

14 helical membrane passes run 5–25 (LALIWPELILTIGGLITLMLG), 38–58 (LSALLTLAAAAAAAIALFGVE), 70–90 (AFGGFAKLLIYAASFICILVA), 97–117 (GMRAEYPTLILFAALGMGIMA), 122–142 (LMTLYVGLELNSLAAYVLASF), 157–177 (FVLGALASGMLLYGISLLYGF), 196–218 (IGLIFGIVFVLSGLGFKISAVPF), 231–253 (TPVTTFFASAPKVAAMALMARIV), 264–284 (WQQIVIFLALASIILGAVGAI), 292–312 (LLAYSSINNVGFMLIGLAAGT), 318–338 (GVLTYLLVYLVTTLGAFLVVL), 364–384 (LAAAMSVFLFSLAGIPPLFGF), 401–421 (PLAVAGIVASVIGAFYYIAII), and 445–465 (IVAASALWLLAVGYLFIPALA).

Belongs to the complex I subunit 2 family. NDH-1 is composed of 14 different subunits. Subunits NuoA, H, J, K, L, M, N constitute the membrane sector of the complex.

Its subcellular location is the cell inner membrane. The enzyme catalyses a quinone + NADH + 5 H(+)(in) = a quinol + NAD(+) + 4 H(+)(out). Functionally, NDH-1 shuttles electrons from NADH, via FMN and iron-sulfur (Fe-S) centers, to quinones in the respiratory chain. The immediate electron acceptor for the enzyme in this species is believed to be ubiquinone. Couples the redox reaction to proton translocation (for every two electrons transferred, four hydrogen ions are translocated across the cytoplasmic membrane), and thus conserves the redox energy in a proton gradient. The polypeptide is NADH-quinone oxidoreductase subunit N (Sphingopyxis alaskensis (strain DSM 13593 / LMG 18877 / RB2256) (Sphingomonas alaskensis)).